The chain runs to 374 residues: Serine/threonine-protein kinase-transforming protein mos (374 aa).

The Protein kinase domain maps to 94 to 370; the sequence is VCLMHRLGSG…LLQRDLKAFR (277 aa). ATP is bound by residues 100 to 108 and K121; that span reads LGSGGFGSV. The active-site Proton acceptor is the D229.

The protein belongs to the protein kinase superfamily. Ser/Thr protein kinase family.

It catalyses the reaction L-seryl-[protein] + ATP = O-phospho-L-seryl-[protein] + ADP + H(+). The catalysed reaction is L-threonyl-[protein] + ATP = O-phospho-L-threonyl-[protein] + ADP + H(+). The protein is Serine/threonine-protein kinase-transforming protein mos (V-MOS) of Mus musculus (Mouse).